The chain runs to 559 residues: U-box domain-containing protein 41 (559 aa).

2 disordered regions span residues 1–30 (MGGN…KHDE) and 121–156 (RMDK…SPSD). Over residues 12 to 24 (HQRSSSATTTTLP) the composition is skewed to polar residues. The U-box domain maps to 30–104 (ETPPEFLCPI…FSWCDRQKVD (75 aa)). ARM repeat units lie at residues 266–305 (EDLR…NLSL), 307–346 (KQNK…SLAL), 348–388 (DENK…HLSL), 390–427 (PSNR…NLAA), and 428–472 (CPDG…TLCQ).

It catalyses the reaction S-ubiquitinyl-[E2 ubiquitin-conjugating enzyme]-L-cysteine + [acceptor protein]-L-lysine = [E2 ubiquitin-conjugating enzyme]-L-cysteine + N(6)-ubiquitinyl-[acceptor protein]-L-lysine.. Its pathway is protein modification; protein ubiquitination. Its function is as follows. Functions as an E3 ubiquitin ligase. This chain is U-box domain-containing protein 41 (PUB41), found in Arabidopsis thaliana (Mouse-ear cress).